Consider the following 27-residue polypeptide: Paragonial peptide PS-1 (27 aa).

A compositionally biased stretch (low complexity) spans 1 to 17 (DVPSANANANNQRTAAA). The segment at 1-27 (DVPSANANANNQRTAAAKPQANAEASS) is disordered.

In terms of tissue distribution, main cells of the accessory glands of males (paragonial gland).

It is found in the secreted. Represses female sexual receptivity and stimulates oviposition. This peptide has a low activity. In Drosophila funebris (Fruit fly), this protein is Paragonial peptide PS-1 (PapC).